A 469-amino-acid polypeptide reads, in one-letter code: RuvB-like helicase 2 (469 aa).

Position 76–83 (76–83 (GPPSTGKT)) interacts with ATP.

Belongs to the RuvB family. May form heterododecamers with RVB1. Component of the SWR1 chromatin remodeling complex, the INO80 chromatin remodeling complex, and of the R2TP complex.

Its subcellular location is the nucleus. The enzyme catalyses ATP + H2O = ADP + phosphate + H(+). In terms of biological role, DNA helicase which participates in several chromatin remodeling complexes, including the SWR1 and the INO80 complexes. The SWR1 complex mediates the ATP-dependent exchange of histone H2A for the H2A variant HZT1 leading to transcriptional regulation of selected genes by chromatin remodeling. The INO80 complex remodels chromatin by shifting nucleosomes and is involved in DNA repair. Also involved in pre-rRNA processing. This chain is RuvB-like helicase 2 (rvb2), found in Aspergillus fumigatus (strain ATCC MYA-4609 / CBS 101355 / FGSC A1100 / Af293) (Neosartorya fumigata).